An 822-amino-acid chain; its full sequence is Calpain-3 (822 aa).

The tract at residues 1-36 (MPTVISASVAPRTGAEPRSPGPIAQAAQGKGTEAGG) is disordered. A Calpain catalytic domain is found at 74–418 (LFVDPEFPPD…FTKLEICNLT (345 aa)). Active-site residues include C129, H335, and N359. The segment at 419–587 (ADALESDKLQ…KRNLSEEVEN (169 aa)) is domain III. Positions 588–649 (TISVDRPVKK…LKPGNIDQES (62 aa)) are linker. The segment at 600–651 (PKPIIFGSDRANSNKELGVDQESEEGKDNTSPDKQAKSPQLKPGNIDQESKE) is disordered. Over residues 623–635 (EEGKDNTSPDKQA) the composition is skewed to basic and acidic residues. EF-hand domains lie at 650 to 684 (KEQR…VVNK), 693 to 726 (FTLE…KKIK), 723 to 758 (KKIK…AGFH), and 788 to 822 (VRLE…TMYA). The tract at residues 650-822 (KEQRQFRNIF…LEWLQLTMYA (173 aa)) is domain IV. The Ca(2+) site is built by A663, D666, E668, E673, D706, D708, S710, R712, E717, D736, D738, S740, T742, E747, D801, D803, D805, and I807.

Belongs to the peptidase C2 family. In terms of assembly, homodimer; via EF-hand domain 4. Interacts with TTN/titin. Interacts with CMYA5; this interaction, which results in CMYA5 proteolysis, may protect CAPN3 from autolysis. Interacts with SIMC1. Interacts with UTP25; the interaction is required for CAPN3 translocation to the nucleolus. As to expression, skeletal muscle.

It is found in the cytoplasm. It localises to the nucleus. The protein localises to the nucleolus. The enzyme catalyses Broad endopeptidase activity.. With respect to regulation, activated by micromolar concentrations of calcium and inhibited by calpastatin. Functionally, calcium-regulated non-lysosomal thiol-protease. Proteolytically cleaves CTBP1. Mediates, with UTP25, the proteasome-independent degradation of p53/TP53. This chain is Calpain-3 (CAPN3), found in Ovis aries (Sheep).